The following is a 433-amino-acid chain: C2H2 type master regulator of conidiophore development brlA (433 aa).

Disordered stretches follow at residues 23-64 (PSEC…SHYH) and 240-265 (KTHT…PVSR). Low complexity predominate over residues 30-48 (TSSFSPLDSPTPTPTSLYS). The span at 240 to 264 (KTHTPSTPHRSVSMGTPSGSDTPVS) shows a compositional bias: polar residues. 2 consecutive C2H2-type zinc fingers follow at residues 321–345 (FKCK…MKSH) and 351–376 (HVCW…TKTH). The tract at residues 391–416 (ETSQDFDPDFRGQLTPDGRPIYGSKL) is disordered.

Its subcellular location is the nucleus. Functionally, brlA, abaA and wetA are pivotal regulators of conidiophore development and conidium maturation. They act individually and together to regulate their own expression and that of numerous other sporulation-specific genes. Binds promoters of target genes at brlA response elements (BREs) containing the conserved sequence 5'-(C/A)(A/G)AGGG(G/A)-3'. Is not required for penicillin V production. This chain is C2H2 type master regulator of conidiophore development brlA, found in Penicillium rubens (strain ATCC 28089 / DSM 1075 / NRRL 1951 / Wisconsin 54-1255) (Penicillium chrysogenum).